The primary structure comprises 325 residues: Lipoyl synthase (325 aa).

Residues Cys71, Cys76, Cys82, Cys97, Cys101, Cys104, and Ser311 each coordinate [4Fe-4S] cluster. A Radical SAM core domain is found at 83–300 (FSGGTATFMI…ERQALAMGFT (218 aa)).

Belongs to the radical SAM superfamily. Lipoyl synthase family. The cofactor is [4Fe-4S] cluster.

The protein resides in the cytoplasm. The enzyme catalyses [[Fe-S] cluster scaffold protein carrying a second [4Fe-4S](2+) cluster] + N(6)-octanoyl-L-lysyl-[protein] + 2 oxidized [2Fe-2S]-[ferredoxin] + 2 S-adenosyl-L-methionine + 4 H(+) = [[Fe-S] cluster scaffold protein] + N(6)-[(R)-dihydrolipoyl]-L-lysyl-[protein] + 4 Fe(3+) + 2 hydrogen sulfide + 2 5'-deoxyadenosine + 2 L-methionine + 2 reduced [2Fe-2S]-[ferredoxin]. Its pathway is protein modification; protein lipoylation via endogenous pathway; protein N(6)-(lipoyl)lysine from octanoyl-[acyl-carrier-protein]: step 2/2. Catalyzes the radical-mediated insertion of two sulfur atoms into the C-6 and C-8 positions of the octanoyl moiety bound to the lipoyl domains of lipoate-dependent enzymes, thereby converting the octanoylated domains into lipoylated derivatives. The chain is Lipoyl synthase from Methylobacillus flagellatus (strain ATCC 51484 / DSM 6875 / VKM B-1610 / KT).